A 466-amino-acid polypeptide reads, in one-letter code: MSDVRLRFAPSPTGYLHVGGARTALFNWLLARKQGGTFILRIEDTDVARSTQESVDAILQGMEWLGLDWDEGPFYQSERFPVYREFVERLLAEGKAYRCYCTPEELEARREQAMKEGRKPKYDGTCRDLVTQDADRPFVVRFRAPHEGVTAFDDLIKGRIAFNNEELDDLIIQRTDGTPTYNFVVVIDDATMGITTVIRGDDHINNTPRQILLYEALGYPVPRFAHVPMILGADKTRLSKRHGATSVMAYRDMGFLPEAMVNYLVRLGWSHGDEEIFSRQDLVEKFTIEAVGKSAGVFNPDKLLWLNHHYIKESSPERLAELLVPFLRERGVDPSTGPSLPQVVKTLQERSRTLVEMADGALFYYRSEISYDEEAAAKHLVPGTLPLLASLAEKLDACADFSHSGLEAAFKEFIAEKGIKFGQLGPAVRVSLCGGTASPGIYEVVEALGKDETLRRLRRAVAYLEQ.

Residues 10–20 (PSPTGYLHVGG) carry the 'HIGH' region motif. Cys99, Cys101, Cys126, and Asp128 together coordinate Zn(2+). A 'KMSKS' region motif is present at residues 237-241 (RLSKR). Residue Lys240 coordinates ATP.

Belongs to the class-I aminoacyl-tRNA synthetase family. Glutamate--tRNA ligase type 1 subfamily. As to quaternary structure, monomer. It depends on Zn(2+) as a cofactor.

It is found in the cytoplasm. The catalysed reaction is tRNA(Glu) + L-glutamate + ATP = L-glutamyl-tRNA(Glu) + AMP + diphosphate. In terms of biological role, catalyzes the attachment of glutamate to tRNA(Glu) in a two-step reaction: glutamate is first activated by ATP to form Glu-AMP and then transferred to the acceptor end of tRNA(Glu). The polypeptide is Glutamate--tRNA ligase (Geobacter sulfurreducens (strain ATCC 51573 / DSM 12127 / PCA)).